Consider the following 1930-residue polypeptide: MAAAPGLLFWLFVLGALWWVPGQSDLSHGRRFSDLKVCGDEECSMLMYRGKALEDFTGPDCRFVNFKKGDDVYVYYKLAGGSLELWAGSVEHSFGYFPKDLIKVLHKYTEEELHIPADETDFVCFEGGRDDFNSYNVEELLGSLELEDSVPEESKKAEEVSQHREKSPEESRGRELDPVPEPEAFRADSEDGEGAFSESTEGLQGQPSAQESHPHTSGPAANAQGVQSSLDTFEEILHDKLKVPGSESRTGNSSPASVEREKTDAYKVLKTEMSLDLKTKFGSTADALVSDDEATRLVTSLEDGFDEALDAEYYPMEEEEEVEEDADSSDELPLLTFSDKDEKVPGKPMIEKYLTDKDPNLSEEDKVEPPTWGDAFFSIVTGGEGKPGVVDLERSIEEEEDVSVSSSHQRKPQPAAGYTDSEDEGDDLFVEEPKTNDVKDSETDPELVITGEEKDIQESRKGLVQPESQSEDAKSETASAYRLQGSKLNPLSAAEKGRDFTLKAVFEKKENGLKESVIHISKETLHEDKTREIQRDSLESELVHRALGSSVTENNKPKSLGVAPLLGNNKPDASKDSTEVPDGSVSGPKAGQQEGFLEPGLKTQHQPRFSPPEETGPSRELGGKVPISGRNLSWQQEQDVAAVVGKHANEKTGFPEEESREDGTDAEQARAIRRPQEAESPEVLSVQPGRPDEEEEEEEGDNYPPEGLMEDENAVSAQQSRENSPSARDGRSDMNSQVFEKVILGTLNLNTEKTKQPANMILETGQESETTSEEAGDVGKESGHSVVVDSEESHLADMRAQRPSQVHGLRDETAAQTPGSGEAVLSKNPNDLQKDNPEEELVNTLGLEDPGVGEISEGEPEDTKEFGVSESQGTDAEDLRDDPSRQATPEIPDIVLKSIREDLPIINSFFKDDQQSLHRFLKYFDVRELEGLLEDMSIRLRSAHQNSLPYNMEKVLDKVFRASESRILSMAEKMLDTGVAKNRDLGSKESSPLEEAEVLDDIQDLIYFVRYQYSGVETAPLVTPPPPEEGWARPGEERQPPQQDSLPQENTGDLSVQPPEEPELSDQPVTSVQPPEEPELSDQPVTSVQPPEEPELSDQPVTSVQPPEEPELSDQPVTGYTSTSEVSQKPDTKKDIDLGPVMEGGPVGAGDVQKQLETIAEEPAAVPPLESAFGSLYAFILYLSKMLLATLPDNVQPGPDFYGLPWQPVIITAVLGIVSFAIFSWRTILVVKSRVYQVTEKQISEKLENIKKENAELMQKLSSYEQKIKESKKYVQETKKQNMILSDEAVKYKDKIKILEETNVSLGDKAKSLRLQLESEREQNVKNQDLILENKKSIEKLKDVISMNASELSEVQVALNEAKLSEENVKSECHRVQEENARLKKKKEQLQQQVEEWSKSHAELTGQIKSFEKSQEDLEIALTHKDDNISALTNCITQLNRLECELESEDPDKGGNESDDLANGETGGDRSEKIRNRIKQMMDVSRTQTAVSIVEEDLKLLQLKLRASMSTKCNLEDQIKKLEDDRSSLQTAKAGLEDECKTLRQKVEILNELYQQKEMALQKKLSQEEYERQDREQRLTAADEKVVLAAEEVKTYKRRIEEMEEELQKTERSFKNQIAAHEKKAHDNWLKARAAERAMAEEKREAANLRHKLLEMTQKMAMRQDEPVIVKPMPGRPNTQNPPRRGLLSQNGSFGPSPVSGGECSPPLPAEPPGRPLSATLSRRDTPRSEFGSLDRHLPRPRWPSEASGKHSASDPGPAPVVNSSSRSSSPAKAVDEGKVNMAPKGPPPFPGVPLMGGPVPPPIRYGPPPQLCGGPFGPRPLPPPFVPGMHPPLGVREYAPGVLPGKRDLPLDPREFLPGHTPFRPPGSLGPREFFIPGTRLPPPTHGPQEYPPPPPAVRDSLPSGPREEAKPASPSSVQDRSQASKPTP.

An N-terminal signal peptide occupies residues 1-24 (MAAAPGLLFWLFVLGALWWVPGQS). Topologically, residues 25–1171 (DLSHGRRFSD…EPAAVPPLES (1147 aa)) are lumenal. Positions 45–107 (MLMYRGKALE…PKDLIKVLHK (63 aa)) constitute an SH3 domain. 5 disordered regions span residues 144 to 263 (LELE…REKT), 317 to 496 (EEEE…AAEK), 547 to 737 (LGSS…MNSQ), 754 to 891 (TKQP…TPEI), and 1018 to 1149 (TAPL…PVGA). The span at 152–189 (EESKKAEEVSQHREKSPEESRGRELDPVPEPEAFRADS) shows a compositional bias: basic and acidic residues. A compositionally biased stretch (polar residues) spans 197–211 (SESTEGLQGQPSAQE). Serine 229 carries the phosphoserine modification. The segment covering 247–256 (ESRTGNSSPA) has biased composition (polar residues). Residues 317–330 (EEEEEVEEDADSSD) are compositionally biased toward acidic residues. The span at 338–368 (SDKDEKVPGKPMIEKYLTDKDPNLSEEDKVE) shows a compositional bias: basic and acidic residues. Asparagine 360 carries N-linked (GlcNAc...) asparagine glycosylation. Over residues 420–430 (DSEDEGDDLFV) the composition is skewed to acidic residues. Basic and acidic residues-rich tracts occupy residues 431–442 (EEPKTNDVKDSE) and 451–461 (GEEKDIQESRK). An N-linked (GlcNAc...) asparagine glycan is attached at asparagine 631. Basic and acidic residues predominate over residues 661 to 677 (EDGTDAEQARAIRRPQE). The segment covering 692–701 (DEEEEEEEGD) has biased composition (acidic residues). Residues 715 to 726 (VSAQQSRENSPS) are compositionally biased toward polar residues. Residues 791–800 (EESHLADMRA) show a composition bias toward basic and acidic residues. At serine 856 the chain carries Phosphoserine. Basic and acidic residues predominate over residues 1030-1039 (GWARPGEERQ). 2 stretches are compositionally biased toward polar residues: residues 1040 to 1054 (PPQQDSLPQENTGDL) and 1115 to 1127 (QPVTGYTSTSEVS). A compositionally biased stretch (basic and acidic residues) spans 1128 to 1137 (QKPDTKKDID). The stretch at 1172-1192 (AFGSLYAFILYLSKMLLATLP) is an intramembrane region. Topologically, residues 1193–1202 (DNVQPGPDFY) are lumenal. A helical membrane pass occupies residues 1203–1223 (GLPWQPVIITAVLGIVSFAIF). Topologically, residues 1224–1930 (SWRTILVVKS…DRSQASKPTP (707 aa)) are cytoplasmic. Coiled-coil stretches lie at residues 1236-1329 (YQVT…KNQD) and 1359-1422 (LNEA…EIAL). A mediates interaction with MIA2 region spans residues 1238–1677 (VTEKQISEKL…VIVKPMPGRP (440 aa)). The interval 1447-1472 (ESEDPDKGGNESDDLANGETGGDRSE) is disordered. The residue at position 1458 (serine 1458) is a Phosphoserine. The stretch at 1514–1662 (NLEDQIKKLE…LLEMTQKMAM (149 aa)) forms a coiled coil. Disordered stretches follow at residues 1669–1796 (IVKP…VPLM), 1801–1820 (PPPIRYGPPPQLCGGPFGPR), and 1840–1930 (APGV…KPTP). Residues 1677–1694 (PNTQNPPRRGLLSQNGSF) are compositionally biased toward polar residues. A phosphoserine mark is found at serine 1693 and serine 1705. Pro residues predominate over residues 1706-1715 (PPLPAEPPGR). Positions 1722 to 1738 (SRRDTPRSEFGSLDRHL) are enriched in basic and acidic residues. Serine 1733, serine 1754, serine 1766, and serine 1770 each carry phosphoserine. The segment covering 1760–1773 (PVVNSSSRSSSPAK) has biased composition (low complexity). Positions 1776–1930 (DEGKVNMAPK…DRSQASKPTP (155 aa)) are proline-rich domain (PRD); mediates interaction with the COPII coat subunits SEC23A and SEC23B. Pro residues predominate over residues 1801-1811 (PPPIRYGPPPQ). Arginine 1805 is modified (asymmetric dimethylarginine). Residues 1809 to 1869 (PPQLCGGPFG…GHTPFRPPGS (61 aa)) are SEC16A-interacting region (SIR); required for its localization to endoplasmic reticulum exit sites and for its interaction with SEC16A. Over residues 1846-1858 (GKRDLPLDPREFL) the composition is skewed to basic and acidic residues. The segment covering 1881-1898 (RLPPPTHGPQEYPPPPPA) has biased composition (pro residues). Residue serine 1915 is modified to Phosphoserine. A compositionally biased stretch (polar residues) spans 1915–1930 (SPSSVQDRSQASKPTP).

This sequence belongs to the MIA/OTOR family. Tango1 subfamily. As to quaternary structure, interacts with MIA2. Interacts (via SH3 domain) with COL7A1. Interacts with the COPII coat subunits SEC23A, SEC23B and maybe SEC24C. May interact with APOB and MIA2. Interacts with SEC16A.

Its subcellular location is the endoplasmic reticulum membrane. Functionally, plays a role in the transport of cargos that are too large to fit into COPII-coated vesicles and require specific mechanisms to be incorporated into membrane-bound carriers and exported from the endoplasmic reticulum. This protein is required for collagen VII (COL7A1) secretion by loading COL7A1 into transport carriers. It may participate in cargo loading of COL7A1 at endoplasmic reticulum exit sites by binding to COPII coat subunits Sec23/24 and guiding SH3-bound COL7A1 into a growing carrier. Does not play a role in global protein secretion and is apparently specific to COL7A1 cargo loading. However, it may participate in secretion of other proteins in cells that do not secrete COL7A1. It is also specifically required for the secretion of lipoproteins by participating in their export from the endoplasmic reticulum. Required for correct assembly of COPII coat components at endoplasmic reticulum exit sites (ERES) and for the localization of SEC16A and membrane-bound ER-resident complexes consisting of MIA2 and PREB/SEC12 to ERES. The sequence is that of Transport and Golgi organization protein 1 homolog from Mus musculus (Mouse).